An 889-amino-acid chain; its full sequence is Phosphatidylinositol 3-kinase VPS34 (889 aa).

Residues 34-184 form the C2 PI3K-type domain; it reads ASEKLIDPQL…EWIDELVLKK (151 aa). The region spanning 298 to 540 is the PIK helical domain; it reads SDKHVKPDAK…ESFLSRLNSN (243 aa). The 267-residue stretch at 607-873 folds into the PI3K/PI4K catalytic domain; it reads MIDQCNVFKS…LINDSVNALL (267 aa). The G-loop stretch occupies residues 613–619; it reads VFKSSLS. Residues 742-750 are catalytic loop; the sequence is GVGDRHLDN. The tract at residues 761–782 is activation loop; it reads HADFGYILGQDPKPFPPLMKLP.

Belongs to the PI3/PI4-kinase family. Type III PI4K subfamily. As to quaternary structure, component of the autophagy-specific VPS34 PI3-kinase complex I composed of VPS15, VPS30, VPS34, ATG14 and ATG38; and of the VPS34 PI3-kinase complex II composed of VPS15, VPS30, VPS34 and VPS38. Autophosphorylated.

It is found in the golgi apparatus. The protein resides in the trans-Golgi network membrane. Its subcellular location is the endosome membrane. The enzyme catalyses a 1,2-diacyl-sn-glycero-3-phospho-(1D-myo-inositol) + ATP = a 1,2-diacyl-sn-glycero-3-phospho-(1D-myo-inositol-3-phosphate) + ADP + H(+). Its function is as follows. Multifunctional phosphatidylinositol 3-kinase that plays a role in signaling in modulation of host immune response, intracellular survival and virulence. Catalytic subunit of the autophagy-specific VPS34 PI3-kinase complex I essential to recruit the ATG8-phosphatidylinositol conjugate and the ATG12-ATG5 conjugate to the pre-autophagosomal structure. Also involved in endosome-to-Golgi retrograde transport as part of the VPS34 PI3-kinase complex II. This second complex is required for the endosome-to-Golgi retrieval of PEP1 and KEX2, and the recruitment of VPS5 and VPS7, two components of the retromer complex, to endosomal membranes (probably through the synthesis of a specific pool of phosphatidylinositol 3-phosphate recruiting the retromer to the endosomes). Finally, it might also be involved in ethanol tolerance and cell wall integrity. The chain is Phosphatidylinositol 3-kinase VPS34 from Candida glabrata (strain ATCC 2001 / BCRC 20586 / JCM 3761 / NBRC 0622 / NRRL Y-65 / CBS 138) (Yeast).